The primary structure comprises 220 residues: Ribosomal RNA large subunit methyltransferase E (220 aa).

S-adenosyl-L-methionine contacts are provided by Gly-60, Trp-62, Asp-92, Asp-108, and Asp-133. The Proton acceptor role is filled by Lys-173.

The protein belongs to the class I-like SAM-binding methyltransferase superfamily. RNA methyltransferase RlmE family.

Its subcellular location is the cytoplasm. It carries out the reaction uridine(2552) in 23S rRNA + S-adenosyl-L-methionine = 2'-O-methyluridine(2552) in 23S rRNA + S-adenosyl-L-homocysteine + H(+). In terms of biological role, specifically methylates the uridine in position 2552 of 23S rRNA at the 2'-O position of the ribose in the fully assembled 50S ribosomal subunit. The sequence is that of Ribosomal RNA large subunit methyltransferase E from Burkholderia thailandensis (strain ATCC 700388 / DSM 13276 / CCUG 48851 / CIP 106301 / E264).